The following is a 188-amino-acid chain: Ribosome-recycling factor (188 aa).

The protein belongs to the RRF family.

It is found in the cytoplasm. Its function is as follows. Responsible for the release of ribosomes from messenger RNA at the termination of protein biosynthesis. May increase the efficiency of translation by recycling ribosomes from one round of translation to another. This chain is Ribosome-recycling factor, found in Akkermansia muciniphila (strain ATCC BAA-835 / DSM 22959 / JCM 33894 / BCRC 81048 / CCUG 64013 / CIP 107961 / Muc).